The following is a 346-amino-acid chain: Coproporphyrin III ferrochelatase (346 aa).

The Fe-coproporphyrin III site is built by serine 52 and tyrosine 121. Residues histidine 181 and glutamate 264 each contribute to the Fe(2+) site.

The protein belongs to the ferrochelatase family.

Its subcellular location is the cytoplasm. The enzyme catalyses Fe-coproporphyrin III + 2 H(+) = coproporphyrin III + Fe(2+). It functions in the pathway porphyrin-containing compound metabolism; protoheme biosynthesis. Its function is as follows. Involved in coproporphyrin-dependent heme b biosynthesis. Catalyzes the insertion of ferrous iron into coproporphyrin III to form Fe-coproporphyrin III. The protein is Coproporphyrin III ferrochelatase of Mycobacterium sp. (strain JLS).